We begin with the raw amino-acid sequence, 465 residues long: Antithrombin-III (465 aa).

A signal peptide spans 1–32; sequence MISNGIGTVTAGKRSICLLPLLLIGLWGCVTC. 2 disulfide bridges follow: cysteine 41/cysteine 161 and cysteine 54/cysteine 128. Phosphothreonine is present on threonine 64. Serine 69 carries the phosphoserine modification. Tryptophan 82 is a heparin binding site. Residue asparagine 129 is glycosylated (N-linked (GlcNAc...) asparagine). Residue arginine 162 participates in heparin binding. N-linked (GlcNAc...) asparagine glycosylation is present at asparagine 168. Position 178 (arginine 178) interacts with heparin. 2 N-linked (GlcNAc...) asparagine glycosylation sites follow: asparagine 188 and asparagine 225. Cysteine 280 and cysteine 463 are joined by a disulfide.

Belongs to the serpin family. Forms protease inhibiting heterodimer with TMPRSS7. In terms of processing, phosphorylated by FAM20C in the extracellular medium. In terms of tissue distribution, plasma.

The protein localises to the secreted. Its subcellular location is the extracellular space. Most important serine protease inhibitor in plasma that regulates the blood coagulation cascade. AT-III inhibits thrombin, matriptase-3/TMPRSS7, as well as factors IXa, Xa and XIa. Its inhibitory activity is greatly enhanced in the presence of heparin. This chain is Antithrombin-III (SERPINC1), found in Bos taurus (Bovine).